The chain runs to 201 residues: MARYTGPKSRIARKFGEGIFGADKVLSKKNYPPGQHGNSRKRKTSEYGVQLREKQKAKYTYGVLEKQFRNLFEKAATAKGITGEVLLQLLEGRLDNVVFRLGIAPTRAAARQLVSHKHITVDGEVVNIPSFAVKPGQLIGVRERSKSLEVIANSLAGFNHSKYAWLEWDETSKVGKMLHIPERADIPENIKEHLIVELYSK.

The disordered stretch occupies residues 26-48 (LSKKNYPPGQHGNSRKRKTSEYG). Residues 92 to 155 (GRLDNVVFRL…KSLEVIANSL (64 aa)) form the S4 RNA-binding domain.

The protein belongs to the universal ribosomal protein uS4 family. As to quaternary structure, part of the 30S ribosomal subunit. Contacts protein S5. The interaction surface between S4 and S5 is involved in control of translational fidelity.

One of the primary rRNA binding proteins, it binds directly to 16S rRNA where it nucleates assembly of the body of the 30S subunit. Functionally, with S5 and S12 plays an important role in translational accuracy. This chain is Small ribosomal subunit protein uS4, found in Bacteroides thetaiotaomicron (strain ATCC 29148 / DSM 2079 / JCM 5827 / CCUG 10774 / NCTC 10582 / VPI-5482 / E50).